A 330-amino-acid chain; its full sequence is Autoinducer 2 import system permease protein LsrD (330 aa).

Over 1–4 (MRIR) the chain is Cytoplasmic. Residues 5 to 25 (YGWELALAALLVIEIVAFGAI) form a helical membrane-spanning segment. Residues 26-42 (NPRMLDLNMLLFSTSDF) are Periplasmic-facing. Residues 43–63 (ICIGIVALPLTMVIVSGGIDI) form a helical membrane-spanning segment. Topologically, residues 64–67 (SFGS) are cytoplasmic. Helical transmembrane passes span 68–88 (TIGL…PMPL) and 89–109 (AILL…GLII). The Cytoplasmic segment spans residues 110 to 115 (YTKVNP). A helical transmembrane segment spans residues 116–136 (LVITLGTLYLFAGSALLLSGM). The Periplasmic segment spans residues 137–159 (AGATGYEGIGGFPMAFTDFANLD). A helical transmembrane segment spans residues 160–180 (VLGLPVPLIIFLICLLVFWLW). Over 181–209 (LHKTHAGRNVFLIGQSPRVAVYSAIPVNR) the chain is Cytoplasmic. Residues 210–230 (TLCALYAMTGLASAVAAVLLV) form a helical membrane-spanning segment. Residues 231 to 237 (SYFGSAR) lie on the Periplasmic side of the membrane. The next 2 helical transmembrane spans lie at 238–258 (SDLG…GGAN) and 259–279 (IYGG…VGYL). The Periplasmic portion of the chain corresponds to 280–285 (QQGLQM). A helical membrane pass occupies residues 286-306 (AGVPNQVSSALSGALLIVVVV). The Cytoplasmic segment spans residues 307 to 330 (GRSVSLHRQQIKEWLARRANNPLP).

The protein belongs to the binding-protein-dependent transport system permease family. AraH/RbsC subfamily. As to quaternary structure, the complex is composed of two ATP-binding proteins (LsrA), two transmembrane proteins (LsrC and LsrD) and a solute-binding protein (LsrB).

The protein resides in the cell inner membrane. Its function is as follows. Part of the ABC transporter complex LsrABCD involved in autoinducer 2 (AI-2) import. Probably responsible for the translocation of the substrate across the membrane. This Escherichia coli (strain SMS-3-5 / SECEC) protein is Autoinducer 2 import system permease protein LsrD (lsrD).